A 545-amino-acid chain; its full sequence is Zona pellucida sperm-binding protein 4 (545 aa).

The signal sequence occupies residues 1 to 28 (MARQALRSTLWLLPSILLCFPFCLPLSG). At 29-518 (QHVTELPGVL…HSGTHADSPT (490 aa)) the chain is on the extracellular side. N-linked (GlcNAc...) asparagine glycosylation is found at Asn50 and Asn74. One can recognise a P-type domain in the interval 148-192 (KVCSPVPVKERLPCASSTISRGDCEELGCCYSSEEEGADSCYYGN). A ZP domain is found at 197–471 (HCTKEGHFSI…PSCTVICPAS (275 aa)). N-linked (GlcNAc...) asparagine glycosylation occurs at Asn228. O-linked (GalNAc...) threonine glycosylation occurs at Thr312. The N-linked (GlcNAc...) asparagine glycan is linked to Asn336. A disulfide bridge links Cys377 with Cys451. Positions 472 to 545 (RRRRKSELYF…VSYLATRKQR (74 aa)) are cleaved as a propeptide — removed in mature form. Asn483 is a glycosylation site (N-linked (GlcNAc...) asparagine). The helical transmembrane segment at 519 to 539 (LWVMGLSASMVITGVLVVSYL) threads the bilayer. At 540–545 (ATRKQR) the chain is on the cytoplasmic side.

It belongs to the ZP domain family. ZPB subfamily. Proteolytically cleaved before the transmembrane segment to yield the secreted ectodomain incorporated in the zona pellucida. In terms of tissue distribution, expressed in oocytes.

The protein localises to the zona pellucida. The protein resides in the cell membrane. In terms of biological role, component of the zona pellucida, an extracellular matrix surrounding oocytes which mediates sperm binding, induction of the acrosome reaction and prevents post-fertilization polyspermy. The zona pellucida is composed of 3 to 4 glycoproteins, ZP1, ZP2, ZP3, and ZP4. ZP4 may act as a sperm receptor. This is Zona pellucida sperm-binding protein 4 (Zp4) from Rattus norvegicus (Rat).